The primary structure comprises 660 residues: Putative ABC transporter ATP-binding MG390 (660 aa).

In terms of domain architecture, Peptidase C39 spans 6 to 126 (QEQQNECGIC…KLWTGYAATV (121 aa)). Cys-12 is an active-site residue. 6 helical membrane passes run 150–170 (LVTF…LLAT), 188–208 (LVVL…LQVI), 265–285 (YIPN…LIGI), 290–310 (FLLI…YDFF), 379–399 (SFFQ…GIIE), and 402–422 (YQLS…TYAT). The ABC transporter domain maps to 464-657 (ISLENLSVTL…QNKINLTNYL (194 aa)). 494–501 (GQNGSGKS) contributes to the ATP binding site.

Belongs to the ABC transporter superfamily.

The protein resides in the cell membrane. The chain is Putative ABC transporter ATP-binding MG390 from Mycoplasma genitalium (strain ATCC 33530 / DSM 19775 / NCTC 10195 / G37) (Mycoplasmoides genitalium).